A 118-amino-acid polypeptide reads, in one-letter code: Small ribosomal subunit protein bS6 (118 aa).

The protein belongs to the bacterial ribosomal protein bS6 family.

Functionally, binds together with bS18 to 16S ribosomal RNA. The chain is Small ribosomal subunit protein bS6 from Saccharopolyspora erythraea (strain ATCC 11635 / DSM 40517 / JCM 4748 / NBRC 13426 / NCIMB 8594 / NRRL 2338).